A 72-amino-acid chain; its full sequence is Cell division protein ZapB (72 aa).

Residues 1 to 72 are a coiled coil; it reads MSSEILDQLE…RSLLGQIDNV (72 aa).

The protein belongs to the ZapB family. As to quaternary structure, homodimer. The ends of the coiled-coil dimer bind to each other, forming polymers. Interacts with FtsZ.

It is found in the cytoplasm. Functionally, non-essential, abundant cell division factor that is required for proper Z-ring formation. It is recruited early to the divisome by direct interaction with FtsZ, stimulating Z-ring assembly and thereby promoting cell division earlier in the cell cycle. Its recruitment to the Z-ring requires functional FtsA or ZipA. This chain is Cell division protein ZapB, found in Actinobacillus succinogenes (strain ATCC 55618 / DSM 22257 / CCUG 43843 / 130Z).